Reading from the N-terminus, the 339-residue chain is Phenylalanine--tRNA ligase alpha subunit (339 aa).

Glu254 contributes to the Mg(2+) binding site.

It belongs to the class-II aminoacyl-tRNA synthetase family. Phe-tRNA synthetase alpha subunit type 1 subfamily. Tetramer of two alpha and two beta subunits. Requires Mg(2+) as cofactor.

It localises to the cytoplasm. It carries out the reaction tRNA(Phe) + L-phenylalanine + ATP = L-phenylalanyl-tRNA(Phe) + AMP + diphosphate + H(+). The polypeptide is Phenylalanine--tRNA ligase alpha subunit (Alkaliphilus oremlandii (strain OhILAs) (Clostridium oremlandii (strain OhILAs))).